A 595-amino-acid polypeptide reads, in one-letter code: ATP-dependent RNA helicase DBP9 (595 aa).

Positions 16 to 44 (KTFSSFQLDLRLQQSLKSSGFHHPTLIQS) match the Q motif motif. A Helicase ATP-binding domain is found at 48–233 (PLALEQKRDI…TKFCRSPAIL (186 aa)). An ATP-binding site is contributed by 61–68 (ASTGSGKT). The DEAD box signature appears at 179 to 182 (DEVD). One can recognise a Helicase C-terminal domain in the interval 246 to 479 (KLLQYYVKVS…PYNFDVKQIE (234 aa)). Acidic residues predominate over residues 340–349 (DEETVEAGEE). Disordered regions lie at residues 340–376 (DEET…GKQK) and 562–595 (KIGF…KNFK). The span at 350–365 (GSEKLEEGGEKLEEIT) shows a compositional bias: basic and acidic residues. A compositionally biased stretch (basic residues) spans 570 to 585 (NPKKNRKGKVAKRKPG). Residues 586 to 595 (RKSDPLKNFK) are compositionally biased toward basic and acidic residues.

This sequence belongs to the DEAD box helicase family. DDX56/DBP9 subfamily.

Its subcellular location is the nucleus. The protein localises to the nucleolus. It catalyses the reaction ATP + H2O = ADP + phosphate + H(+). In terms of biological role, ATP-binding RNA helicase involved in the biogenesis of 60S ribosomal subunits and is required for the normal formation of 25S and 5.8S rRNAs. The protein is ATP-dependent RNA helicase DBP9 (DBP9) of Eremothecium gossypii (strain ATCC 10895 / CBS 109.51 / FGSC 9923 / NRRL Y-1056) (Yeast).